A 169-amino-acid chain; its full sequence is Peptide deformylase (169 aa).

Residues cysteine 91 and histidine 133 each contribute to the Fe cation site. The active site involves glutamate 134. A Fe cation-binding site is contributed by histidine 137.

The protein belongs to the polypeptide deformylase family. It depends on Fe(2+) as a cofactor.

The catalysed reaction is N-terminal N-formyl-L-methionyl-[peptide] + H2O = N-terminal L-methionyl-[peptide] + formate. Functionally, removes the formyl group from the N-terminal Met of newly synthesized proteins. Requires at least a dipeptide for an efficient rate of reaction. N-terminal L-methionine is a prerequisite for activity but the enzyme has broad specificity at other positions. The polypeptide is Peptide deformylase (Escherichia coli (strain K12 / DH10B)).